The chain runs to 110 residues: Nucleoid-associated protein PsycPRwf_1729 (110 aa).

Belongs to the YbaB/EbfC family. As to quaternary structure, homodimer.

The protein resides in the cytoplasm. It is found in the nucleoid. In terms of biological role, binds to DNA and alters its conformation. May be involved in regulation of gene expression, nucleoid organization and DNA protection. The protein is Nucleoid-associated protein PsycPRwf_1729 of Psychrobacter sp. (strain PRwf-1).